We begin with the raw amino-acid sequence, 417 residues long: Hydroxysteroid dehydrogenase-like protein 2 (417 aa).

NADP(+) is bound by residues Gly17–Gly23, Lys42, and Asp74. Tyr168 functions as the Proton acceptor in the catalytic mechanism. Lys172 contributes to the NADP(+) binding site. Residues Ser306 to Asn414 form the SCP2 domain.

Belongs to the short-chain dehydrogenases/reductases (SDR) family.

It localises to the peroxisome. The protein localises to the mitochondrion. Functionally, has apparently no steroid dehydrogenase activity. Might act as a metabolic regulator that affects systemic adaptation to nutritional cues. This is Hydroxysteroid dehydrogenase-like protein 2 (hsdl2) from Xenopus tropicalis (Western clawed frog).